The following is a 488-amino-acid chain: Cobyric acid synthase (488 aa).

A GATase cobBQ-type domain is found at 255-442 (ALKIAVPVLP…LHGLFGSDAY (188 aa)). Cysteine 337 serves as the catalytic Nucleophile. Histidine 434 is an active-site residue.

The protein belongs to the CobB/CobQ family. CobQ subfamily.

It participates in cofactor biosynthesis; adenosylcobalamin biosynthesis. Catalyzes amidations at positions B, D, E, and G on adenosylcobyrinic A,C-diamide. NH(2) groups are provided by glutamine, and one molecule of ATP is hydrogenolyzed for each amidation. In Rhizobium johnstonii (strain DSM 114642 / LMG 32736 / 3841) (Rhizobium leguminosarum bv. viciae), this protein is Cobyric acid synthase.